A 60-amino-acid polypeptide reads, in one-letter code: Snake venom metalloproteinase bothrojaractivase (60 aa).

The Peptidase M12B domain maps to 1-60 (RYIELAVVADHGMFTKYRVHELVNTVNGFFRSKQDLIKVQKDKTLTSFGEWRERDLLPRI). Glutamate 4 contributes to the Ca(2+) binding site.

Belongs to the venom metalloproteinase (M12B) family. P-I subfamily. In terms of assembly, monomer. Requires Zn(2+) as cofactor. Expressed by the venom gland.

It is found in the secreted. Its activity is regulated as follows. Completely inhibited by EDTA and EGTA. Partially inhibited by serine proteinase inhibitors PMSF and benzamidine. Not inhibited by cysteine proteinase inhibitors mercury ions and E-64. Is active without cofactors, although the presence of low concentrations of calcium and zinc ions enhanced its ability to convert prothrombin (F2) into active thrombin. Functionally, prothrombin (F2) activator that is cofactor-independent. Also has fibrinolytic and fibrinogenolytic activity. It degrades the Aalpha-chain and more slowly the Bbeta-chain of fibrin and fibrinogen, while the gamma-chain is only partially and slowly affected. A dose-dependent procoagulant activity is shown in human plasma. The sequence is that of Snake venom metalloproteinase bothrojaractivase from Bothrops jararaca (Jararaca).